The chain runs to 179 residues: Large ribosomal subunit protein uL5 (179 aa).

It belongs to the universal ribosomal protein uL5 family. Part of the 50S ribosomal subunit; part of the 5S rRNA/L5/L18/L25 subcomplex. Contacts the 5S rRNA and the P site tRNA. Forms a bridge to the 30S subunit in the 70S ribosome.

Its function is as follows. This is one of the proteins that bind and probably mediate the attachment of the 5S RNA into the large ribosomal subunit, where it forms part of the central protuberance. In the 70S ribosome it contacts protein S13 of the 30S subunit (bridge B1b), connecting the 2 subunits; this bridge is implicated in subunit movement. Contacts the P site tRNA; the 5S rRNA and some of its associated proteins might help stabilize positioning of ribosome-bound tRNAs. The sequence is that of Large ribosomal subunit protein uL5 from Clostridium perfringens (strain ATCC 13124 / DSM 756 / JCM 1290 / NCIMB 6125 / NCTC 8237 / Type A).